A 470-amino-acid chain; its full sequence is UDP-N-acetylmuramoylalanine--D-glutamate ligase (470 aa).

121-127 (GTNGKST) contributes to the ATP binding site.

Belongs to the MurCDEF family.

The protein localises to the cytoplasm. The catalysed reaction is UDP-N-acetyl-alpha-D-muramoyl-L-alanine + D-glutamate + ATP = UDP-N-acetyl-alpha-D-muramoyl-L-alanyl-D-glutamate + ADP + phosphate + H(+). Its pathway is cell wall biogenesis; peptidoglycan biosynthesis. Cell wall formation. Catalyzes the addition of glutamate to the nucleotide precursor UDP-N-acetylmuramoyl-L-alanine (UMA). This chain is UDP-N-acetylmuramoylalanine--D-glutamate ligase, found in Rhizobium johnstonii (strain DSM 114642 / LMG 32736 / 3841) (Rhizobium leguminosarum bv. viciae).